Reading from the N-terminus, the 464-residue chain is Phosphoglucosamine mutase (464 aa).

Ser-112 serves as the catalytic Phosphoserine intermediate. Mg(2+) is bound by residues Ser-112, Asp-252, Asp-254, and Asp-256. A Phosphoserine modification is found at Ser-112.

The protein belongs to the phosphohexose mutase family. It depends on Mg(2+) as a cofactor. Activated by phosphorylation.

It carries out the reaction alpha-D-glucosamine 1-phosphate = D-glucosamine 6-phosphate. Functionally, catalyzes the conversion of glucosamine-6-phosphate to glucosamine-1-phosphate. In Synechococcus sp. (strain CC9605), this protein is Phosphoglucosamine mutase.